Here is a 67-residue protein sequence, read N- to C-terminus: ATP synthase F(0) complex subunit 8 (67 aa).

Residues 8-24 (TWFINIVSMILTLFIVF) form a helical membrane-spanning segment. N6-acetyllysine; alternate is present on K54. K54 bears the N6-succinyllysine; alternate mark. The residue at position 57 (K57) is an N6-acetyllysine.

Belongs to the ATPase protein 8 family. Component of the ATP synthase complex composed at least of ATP5F1A/subunit alpha, ATP5F1B/subunit beta, ATP5MC1/subunit c (homooctomer), MT-ATP6/subunit a, MT-ATP8/subunit 8, ATP5ME/subunit e, ATP5MF/subunit f, ATP5MG/subunit g, ATP5MK/subunit k, ATP5MJ/subunit j, ATP5F1C/subunit gamma, ATP5F1D/subunit delta, ATP5F1E/subunit epsilon, ATP5PF/subunit F6, ATP5PB/subunit b, ATP5PD/subunit d, ATP5PO/subunit OSCP. ATP synthase complex consists of a soluble F(1) head domain (subunits alpha(3) and beta(3)) - the catalytic core - and a membrane F(0) domain - the membrane proton channel (subunits c, a, 8, e, f, g, k and j). These two domains are linked by a central stalk (subunits gamma, delta, and epsilon) rotating inside the F1 region and a stationary peripheral stalk (subunits F6, b, d, and OSCP). Interacts with PRICKLE3.

The protein localises to the mitochondrion membrane. Functionally, subunit 8, of the mitochondrial membrane ATP synthase complex (F(1)F(0) ATP synthase or Complex V) that produces ATP from ADP in the presence of a proton gradient across the membrane which is generated by electron transport complexes of the respiratory chain. ATP synthase complex consist of a soluble F(1) head domain - the catalytic core - and a membrane F(1) domain - the membrane proton channel. These two domains are linked by a central stalk rotating inside the F(1) region and a stationary peripheral stalk. During catalysis, ATP synthesis in the catalytic domain of F(1) is coupled via a rotary mechanism of the central stalk subunits to proton translocation. In vivo, can only synthesize ATP although its ATP hydrolase activity can be activated artificially in vitro. Part of the complex F(0) domain. The protein is ATP synthase F(0) complex subunit 8 of Equus caballus (Horse).